Reading from the N-terminus, the 437-residue chain is Glycogen synthase (437 aa).

Position 15 (lysine 15) interacts with ADP-alpha-D-glucose.

This sequence belongs to the glycosyltransferase 1 family. Bacterial/plant glycogen synthase subfamily.

The catalysed reaction is [(1-&gt;4)-alpha-D-glucosyl](n) + ADP-alpha-D-glucose = [(1-&gt;4)-alpha-D-glucosyl](n+1) + ADP + H(+). It functions in the pathway glycan biosynthesis; glycogen biosynthesis. In terms of biological role, synthesizes alpha-1,4-glucan chains using ADP-glucose. This Thermus thermophilus (strain ATCC 27634 / DSM 579 / HB8) protein is Glycogen synthase.